A 206-amino-acid chain; its full sequence is Large ribosomal subunit protein uL4 (206 aa).

A disordered region spans residues 43 to 94 (ARSGNRAQKDREQVKHTTKKPWRQKGTGRARAGMSSSPLWRGGGRIFPNSPE). A compositionally biased stretch (basic residues) spans 58–70 (HTTKKPWRQKGTG).

It belongs to the universal ribosomal protein uL4 family. Part of the 50S ribosomal subunit.

Its function is as follows. One of the primary rRNA binding proteins, this protein initially binds near the 5'-end of the 23S rRNA. It is important during the early stages of 50S assembly. It makes multiple contacts with different domains of the 23S rRNA in the assembled 50S subunit and ribosome. Forms part of the polypeptide exit tunnel. This is Large ribosomal subunit protein uL4 from Polynucleobacter asymbioticus (strain DSM 18221 / CIP 109841 / QLW-P1DMWA-1) (Polynucleobacter necessarius subsp. asymbioticus).